We begin with the raw amino-acid sequence, 781 residues long: Potassium transporter 5 (781 aa).

The span at 1–11 (MTEPLHTSSNG) shows a compositional bias: polar residues. Positions 1–24 (MTEPLHTSSNGGAERGPNAAFESE) are disordered. Topologically, residues 1–63 (MTEPLHTSSN…AKVGWATTLH (63 aa)) are cytoplasmic. The helical transmembrane segment at 64–84 (LAFQSIGVVYGDMGTSPLYVF) threads the bilayer. Over 85 to 100 (SSTFTNGIKDTNDILG) the chain is Extracellular. A helical membrane pass occupies residues 101 to 121 (VMSLIIYTVVLLPLIKYCFIV). Over 122–187 (LRANDNGDGG…EKMENSPNFK (66 aa)) the chain is Cytoplasmic. Residues 188–208 (IILFLVTILATSMVIGDGVLT) traverse the membrane as a helical segment. Topologically, residues 209-225 (PCISVLSAVGGIKESAK) are extracellular. The chain crosses the membrane as a helical span at residues 226 to 246 (SLTQGQIAGIAIAILIVLFLV). At 247 to 257 (QRFGTDKVGYS) the chain is on the cytoplasmic side. The chain crosses the membrane as a helical span at residues 258–278 (FGPIILTWFIFIAGTGVYNLF). At 279-304 (KHDTGVLKAFNPKYIVDYFERNGKQG) the chain is on the extracellular side. A helical membrane pass occupies residues 305–325 (WISLGGVILCITGTEAMFADL). At 326-334 (GHFNVRAIQ) the chain is on the cytoplasmic side. A helical membrane pass occupies residues 335 to 355 (IGFSVVLLPSVLLAYIGQAAY). Over 356–381 (LRIYPEHVADTFYKSIPDPLYWPTFV) the chain is Extracellular. Residues 382–402 (VAVAAAIIASQAMISGAFAII) form a helical membrane-spanning segment. Residues 403–426 (AQSQILGCFPRVRVIHTSTKFHGQ) lie on the Cytoplasmic side of the membrane. A helical membrane pass occupies residues 427–447 (VYIPEINYVLMVLCVAVTAIF). Residues 448 to 458 (QTTDKIGNAYG) are Extracellular-facing. A helical transmembrane segment spans residues 459–479 (IAVVFVMFITTLLVTLVMVMI). The Cytoplasmic segment spans residues 480–481 (WK). Residues 482 to 502 (TSLLWIALFPVIFGGAELIYL) traverse the membrane as a helical segment. The Extracellular portion of the chain corresponds to 503–512 (SSAFYKFTQG). A helical transmembrane segment spans residues 513-533 (GYLPLVFSAILMFIMATWHYV). The Cytoplasmic segment spans residues 534–781 (HVHRYKYELR…LLRVGMTYEI (248 aa)). The segment at 681 to 707 (VTDPTSEVQDAMSSRNNSDQHTTEPRN) is disordered. A compositionally biased stretch (polar residues) spans 683–700 (DPTSEVQDAMSSRNNSDQ).

The protein belongs to the HAK/KUP transporter (TC 2.A.72.3) family. In terms of tissue distribution, expressed in root epidermis, parenchyma of stele tissue and primordial of the lateral root, root-shoot junctions and leaf sheaths. Expressed in germinated embryonic tissue, young tillers, flower organs and pedicels.

Its subcellular location is the cell membrane. The enzyme catalyses K(+)(in) = K(+)(out). Functionally, high-affinity potassium transporter. Its potassium transporter activity does not seem to be affected by high sodium and low potassium concentrations in the extracellular environment. Invloved in salt stress tolerance by enhancing root potassium uptake and translocation to the shoot to prevent sodium influx during salt stress. Involved in the positive regulation of disease resistance against the rice grassy stunt virus by promoting potassium transport and increasing endogenous plant potassium. This is Potassium transporter 5 (HAK5) from Oryza sativa subsp. japonica (Rice).